The following is a 309-amino-acid chain: 2-phospho-L-lactate transferase (309 aa).

Residues D48 and K87 each coordinate 7,8-didemethyl-8-hydroxy-5-deazariboflavin.

It belongs to the CofD family. Homodimer. Mg(2+) is required as a cofactor.

It carries out the reaction (2S)-lactyl-2-diphospho-5'-guanosine + 7,8-didemethyl-8-hydroxy-5-deazariboflavin = oxidized coenzyme F420-0 + GMP + H(+). It functions in the pathway cofactor biosynthesis; coenzyme F420 biosynthesis. Catalyzes the transfer of the 2-phospholactate moiety from (2S)-lactyl-2-diphospho-5'-guanosine to 7,8-didemethyl-8-hydroxy-5-deazariboflavin (FO) with the formation of oxidized coenzyme F420-0 and GMP. The protein is 2-phospho-L-lactate transferase of Methanosarcina barkeri (strain Fusaro / DSM 804).